Reading from the N-terminus, the 320-residue chain is Lipoyl synthase (320 aa).

A disordered region spans residues 9-31 (ANDARPRHPEKAHRPDQPIQRKP). Positions 12-31 (ARPRHPEKAHRPDQPIQRKP) are enriched in basic and acidic residues. Positions 60, 65, 71, 86, 90, 93, and 299 each coordinate [4Fe-4S] cluster. One can recognise a Radical SAM core domain in the interval 72-288 (WEKKHATFMI…ETTAYAKGFL (217 aa)).

The protein belongs to the radical SAM superfamily. Lipoyl synthase family. Requires [4Fe-4S] cluster as cofactor.

It localises to the cytoplasm. The enzyme catalyses [[Fe-S] cluster scaffold protein carrying a second [4Fe-4S](2+) cluster] + N(6)-octanoyl-L-lysyl-[protein] + 2 oxidized [2Fe-2S]-[ferredoxin] + 2 S-adenosyl-L-methionine + 4 H(+) = [[Fe-S] cluster scaffold protein] + N(6)-[(R)-dihydrolipoyl]-L-lysyl-[protein] + 4 Fe(3+) + 2 hydrogen sulfide + 2 5'-deoxyadenosine + 2 L-methionine + 2 reduced [2Fe-2S]-[ferredoxin]. Its pathway is protein modification; protein lipoylation via endogenous pathway; protein N(6)-(lipoyl)lysine from octanoyl-[acyl-carrier-protein]: step 2/2. Its function is as follows. Catalyzes the radical-mediated insertion of two sulfur atoms into the C-6 and C-8 positions of the octanoyl moiety bound to the lipoyl domains of lipoate-dependent enzymes, thereby converting the octanoylated domains into lipoylated derivatives. The chain is Lipoyl synthase from Methylobacterium nodulans (strain LMG 21967 / CNCM I-2342 / ORS 2060).